The chain runs to 675 residues: UvrABC system protein B (675 aa).

Positions 30-417 constitute a Helicase ATP-binding domain; sequence SGIEQGNRNQ…SDQIVEQVVR (388 aa). 43–50 lines the ATP pocket; it reads GVTGSGKT. Residues 96–119 carry the Beta-hairpin motif; it reads YYDYYQPEAYVPSSDTFIEKDAAI. The Helicase C-terminal domain maps to 434–601; that stretch reads QVDDVLSEIN…AVRQKVKEID (168 aa). Residues 637-672 enclose the UVR domain; that stretch reads AKHMSKLEKEMLKASKELQFEQAARLRDEILRLKAQ.

Belongs to the UvrB family. As to quaternary structure, forms a heterotetramer with UvrA during the search for lesions. Interacts with UvrC in an incision complex.

Its subcellular location is the cytoplasm. Its function is as follows. The UvrABC repair system catalyzes the recognition and processing of DNA lesions. A damage recognition complex composed of 2 UvrA and 2 UvrB subunits scans DNA for abnormalities. Upon binding of the UvrA(2)B(2) complex to a putative damaged site, the DNA wraps around one UvrB monomer. DNA wrap is dependent on ATP binding by UvrB and probably causes local melting of the DNA helix, facilitating insertion of UvrB beta-hairpin between the DNA strands. Then UvrB probes one DNA strand for the presence of a lesion. If a lesion is found the UvrA subunits dissociate and the UvrB-DNA preincision complex is formed. This complex is subsequently bound by UvrC and the second UvrB is released. If no lesion is found, the DNA wraps around the other UvrB subunit that will check the other stand for damage. The sequence is that of UvrABC system protein B from Acinetobacter baylyi (strain ATCC 33305 / BD413 / ADP1).